Here is a 279-residue protein sequence, read N- to C-terminus: Esterase CG5412 (279 aa).

Catalysis depends on charge relay system residues serine 133, aspartate 191, and histidine 218. Residues 249–279 form a disordered region; it reads QSGNASFVDSGAEDDNDAEVAAMTAELDESD.

The protein belongs to the LovG family.

The chain is Esterase CG5412 from Drosophila melanogaster (Fruit fly).